A 286-amino-acid chain; its full sequence is UDP-3-O-acyl-N-acetylglucosamine deacetylase (286 aa).

Positions 81, 240, and 244 each coordinate Zn(2+). Catalysis depends on histidine 266, which acts as the Proton donor.

It belongs to the LpxC family. It depends on Zn(2+) as a cofactor.

The enzyme catalyses a UDP-3-O-[(3R)-3-hydroxyacyl]-N-acetyl-alpha-D-glucosamine + H2O = a UDP-3-O-[(3R)-3-hydroxyacyl]-alpha-D-glucosamine + acetate. It participates in glycolipid biosynthesis; lipid IV(A) biosynthesis; lipid IV(A) from (3R)-3-hydroxytetradecanoyl-[acyl-carrier-protein] and UDP-N-acetyl-alpha-D-glucosamine: step 2/6. Catalyzes the hydrolysis of UDP-3-O-myristoyl-N-acetylglucosamine to form UDP-3-O-myristoylglucosamine and acetate, the committed step in lipid A biosynthesis. The protein is UDP-3-O-acyl-N-acetylglucosamine deacetylase of Francisella tularensis subsp. tularensis (strain FSC 198).